The sequence spans 294 residues: ADP-ribosyl-[dinitrogen reductase] glycohydrolase (294 aa).

ADP-D-ribose contacts are provided by residues 100-102 (NTC), Glu-121, His-158, and Tyr-212. Residues Asp-243, Asp-245, and Thr-246 each contribute to the Mn(2+) site.

This sequence belongs to the ADP-ribosylglycohydrolase family. In terms of assembly, monomer. Mn(2+) serves as cofactor.

The protein localises to the cytoplasm. The enzyme catalyses N(omega)-alpha-(ADP-D-ribosyl)-L-arginyl-[dinitrogen reductase] + H2O = L-arginyl-[dinitrogen reductase] + ADP-D-ribose. Its function is as follows. Involved in the regulation of nitrogen fixation activity by the reversible ADP-ribosylation of one subunit of the homodimeric dinitrogenase reductase component of the nitrogenase enzyme complex. The ADP-ribosyltransferase (DraT) transfers the ADP-ribose group from NAD to dinitrogenase reductase. The ADP-ribose group is removed through the action of the ADP-ribosylglycohydrolase (DraG, this entry). In Rhodospirillum rubrum, this protein is ADP-ribosyl-[dinitrogen reductase] glycohydrolase.